The sequence spans 80 residues: Serine palmitoyltransferase small subunit B (80 aa).

Residues 1 to 11 (MDVKHIKDYLS) lie on the Cytoplasmic side of the membrane. Residues 12-29 (WLYYQYLLITCSYVLEPW) form a helical membrane-spanning segment. The Lumenal segment spans residues 30-36 (EQSIFNT). Residues 37 to 57 (LLLTIIAMVIYSSYIFIPIHV) traverse the membrane as a helical segment. The Cytoplasmic portion of the chain corresponds to 58–80 (RLAVEFFSGIFGGQHESTVALMS).

Belongs to the SPTSS family. SPTSSB subfamily. Component of the serine palmitoyltransferase (SPT) complex, which is composed of SPTLC1, SPTLC2 or SPTLC3 and SPTSSA or SPTSSB. The heterodimer consisting of SPTLC1 and SPTLC2/SPTLC3 forms the catalytic core of the enzyme, while SPTSSA or SPTSSB subunits determine substrate specificity. SPT also interacts with ORMDL proteins, especially ORMDL3, which negatively regulate SPT activity in the presence of ceramides.

Its subcellular location is the endoplasmic reticulum membrane. It functions in the pathway lipid metabolism; sphingolipid metabolism. In terms of biological role, component of the serine palmitoyltransferase multisubunit enzyme (SPT) that catalyzes the initial and rate-limiting step in sphingolipid biosynthesis by condensing L-serine and activated acyl-CoA (most commonly palmitoyl-CoA) to form long-chain bases. The SPT complex is composed of SPTLC1, SPTLC2 or SPTLC3 and SPTSSA or SPTSSB. Within this complex, the heterodimer consisting of SPTLC1 and SPTLC2/SPTLC3 forms the catalytic core. Within the SPT complex, SPTSSB stimulates the catalytic activity and plays a role in substrate specificity. SPT complexes with this subunit showing a preference for longer acyl-CoAs. The SPTLC1-SPTLC2-SPTSSB complex shows a strong preference for C18-CoA substrate, while the SPTLC1-SPTLC3-SPTSSB isozyme displays an ability to use a broader range of acyl-CoAs, without apparent preference. This is Serine palmitoyltransferase small subunit B (sptssb) from Xenopus tropicalis (Western clawed frog).